The sequence spans 162 residues: HTH-type transcriptional regulator IscR (162 aa).

An HTH rrf2-type domain is found at 2 to 131 (RLTSKGRYAV…NNITLGELVN (130 aa)). The segment at residues 28 to 51 (LADISERQGISLSYLEQLFSRLRK) is a DNA-binding region (H-T-H motif). [2Fe-2S] cluster is bound by residues Cys-92, Cys-98, and Cys-104.

It depends on [2Fe-2S] cluster as a cofactor.

Its function is as follows. Regulates the transcription of several operons and genes involved in the biogenesis of Fe-S clusters and Fe-S-containing proteins. The chain is HTH-type transcriptional regulator IscR from Shigella sonnei (strain Ss046).